The following is a 111-amino-acid chain: uncharacterized protein (111 aa).

Transmembrane regions (helical) follow at residues 29 to 49 and 52 to 72; these read LLNFFIFFSLHLCALFLATAV and ACFACFVLFRHAILLLFYLLA.

Its subcellular location is the membrane. This is an uncharacterized protein from Saccharomyces cerevisiae (strain ATCC 204508 / S288c) (Baker's yeast).